Here is a 427-residue protein sequence, read N- to C-terminus: 3-phosphoshikimate 1-carboxyvinyltransferase (427 aa).

3-phosphoshikimate contacts are provided by Lys-20, Ser-21, and Arg-25. Position 20 (Lys-20) interacts with phosphoenolpyruvate. Residues Gly-92 and Arg-120 each coordinate phosphoenolpyruvate. 3-phosphoshikimate is bound by residues Ser-166, Gln-168, Asp-312, and Lys-339. Gln-168 is a binding site for phosphoenolpyruvate. Residue Asp-312 is the Proton acceptor of the active site. Phosphoenolpyruvate is bound by residues Arg-343 and Arg-385.

The protein belongs to the EPSP synthase family. Monomer.

It is found in the cytoplasm. The enzyme catalyses 3-phosphoshikimate + phosphoenolpyruvate = 5-O-(1-carboxyvinyl)-3-phosphoshikimate + phosphate. It functions in the pathway metabolic intermediate biosynthesis; chorismate biosynthesis; chorismate from D-erythrose 4-phosphate and phosphoenolpyruvate: step 6/7. Its function is as follows. Catalyzes the transfer of the enolpyruvyl moiety of phosphoenolpyruvate (PEP) to the 5-hydroxyl of shikimate-3-phosphate (S3P) to produce enolpyruvyl shikimate-3-phosphate and inorganic phosphate. In Streptococcus thermophilus (strain ATCC BAA-491 / LMD-9), this protein is 3-phosphoshikimate 1-carboxyvinyltransferase.